We begin with the raw amino-acid sequence, 307 residues long: Aspartate carbamoyltransferase catalytic subunit (307 aa).

2 residues coordinate carbamoyl phosphate: Arg-51 and Thr-52. Lys-80 contributes to the L-aspartate binding site. Residues Arg-101, His-129, and Gln-132 each contribute to the carbamoyl phosphate site. 2 residues coordinate L-aspartate: Arg-162 and Arg-225. Carbamoyl phosphate contacts are provided by Leu-264 and Pro-265.

This sequence belongs to the aspartate/ornithine carbamoyltransferase superfamily. ATCase family. As to quaternary structure, heterododecamer (2C3:3R2) of six catalytic PyrB chains organized as two trimers (C3), and six regulatory PyrI chains organized as three dimers (R2).

It catalyses the reaction carbamoyl phosphate + L-aspartate = N-carbamoyl-L-aspartate + phosphate + H(+). It participates in pyrimidine metabolism; UMP biosynthesis via de novo pathway; (S)-dihydroorotate from bicarbonate: step 2/3. Functionally, catalyzes the condensation of carbamoyl phosphate and aspartate to form carbamoyl aspartate and inorganic phosphate, the committed step in the de novo pyrimidine nucleotide biosynthesis pathway. The protein is Aspartate carbamoyltransferase catalytic subunit of Lachnoclostridium phytofermentans (strain ATCC 700394 / DSM 18823 / ISDg) (Clostridium phytofermentans).